Consider the following 384-residue polypeptide: D-galactosamine-6-phosphate deaminase AgaS (384 aa).

SIS domains follow at residues 45 to 197 (LEPL…SQTF) and 215 to 364 (SEGV…PDTP).

The protein belongs to the SIS family. AgaS subfamily.

It carries out the reaction D-galactosamine 6-phosphate + H2O = D-tagatopyranose 1-phosphate + NH4(+). Functionally, catalyzes the isomerization-deamination of galactosamine 6-phosphate to form tagatofuranose 6-phosphate and ammonium ion. This Escherichia coli O157:H7 protein is D-galactosamine-6-phosphate deaminase AgaS.